Reading from the N-terminus, the 93-residue chain is Large ribosomal subunit protein uL23cz/uL23cy (93 aa).

It belongs to the universal ribosomal protein uL23 family. As to quaternary structure, part of the 50S ribosomal subunit.

It is found in the plastid. The protein resides in the chloroplast. Its function is as follows. Binds to 23S rRNA. The chain is Large ribosomal subunit protein uL23cz/uL23cy (rpl23-A) from Glycine max (Soybean).